We begin with the raw amino-acid sequence, 310 residues long: HMG box-containing protein C28F2.11 (310 aa).

Over residues 69-95 the composition is skewed to low complexity; it reads ESPSKKATSPKKATPAAVAPVEATSAV. A disordered region spans residues 69-310; sequence ESPSKKATSP…TTPPTAKVAN (242 aa). Ser70 is modified (phosphoserine). The residue at position 105 (Thr105) is a Phosphothreonine. Positions 117–187 form a DNA-binding region, HMG box; the sequence is PKRPPSAYNL…AYEEEMAAYN (71 aa). Basic and acidic residues-rich tracts occupy residues 131 to 178 and 200 to 226; these read QRSE…LREA and VTAE…DFSE. 3 positions are modified to phosphoserine: Ser161, Ser214, and Ser215. Phosphothreonine occurs at positions 217 and 237. Positions 255–268 are enriched in polar residues; it reads STVPTSNVEPVSQP. Residues Ser271, Ser278, Ser294, Ser295, and Ser297 each carry the phosphoserine modification. 2 positions are modified to phosphothreonine: Thr302 and Thr305.

The protein localises to the cytoplasm. The polypeptide is HMG box-containing protein C28F2.11 (Schizosaccharomyces pombe (strain 972 / ATCC 24843) (Fission yeast)).